Reading from the N-terminus, the 503-residue chain is Lithocholate 6-beta-hydroxylase (503 aa).

Cysteine 442 serves as a coordination point for heme.

The protein belongs to the cytochrome P450 family. It depends on heme as a cofactor.

The protein resides in the endoplasmic reticulum membrane. It is found in the microsome membrane. The enzyme catalyses lithocholate + reduced [NADPH--hemoprotein reductase] + O2 = 6beta-hydroxylithocholate + oxidized [NADPH--hemoprotein reductase] + H2O + H(+). In terms of biological role, catalyzes the 6 beta-hydroxylation of lithocholic acid and steroid hormones. The sequence is that of Lithocholate 6-beta-hydroxylase (CYP3A10) from Mesocricetus auratus (Golden hamster).